Here is a 118-residue protein sequence, read N- to C-terminus: MKTLTGLLLVGLLALWIGLPSTSSKILFGCGISPGNPFPCSLPGLTGNRCRRDYDCPQTLRCCNFRCSRSCRIPPVLPWSCPRNPFKCTIPGIDRCRYDYDCPGRQRCCYYSCSRICK.

An N-terminal signal peptide occupies residues 1–24 (MKTLTGLLLVGLLALWIGLPSTSS). WAP domains lie at 25 to 72 (KILF…RSCR) and 74 to 118 (PPVL…RICK). Disulfide bonds link C30/C63, C40/C67, C50/C62, C56/C71, C81/C109, C88/C113, C96/C108, and C102/C117.

Belongs to the venom waprin family. In terms of tissue distribution, expressed by the venom gland.

The protein localises to the secreted. Its function is as follows. Damages membranes of susceptible bacteria. Has no hemolytic activity. Not toxic to mice. Does not inhibit the proteinases elastase and cathepsin G. The protein is Waprin-Enh1 of Pseudoferania polylepis (Macleay's water snake).